The sequence spans 238 residues: Probable xyloglucan-specific endo-beta-1,4-glucanase A (238 aa).

The signal sequence occupies residues 1 to 18 (MKFSLSVALSLAAATAQA). N-linked (GlcNAc...) asparagine glycans are attached at residues Asn-106 and Asn-171.

The protein belongs to the glycosyl hydrolase 12 (cellulase H) family.

It localises to the secreted. The enzyme catalyses xyloglucan + H2O = xyloglucan oligosaccharides.. In terms of biological role, catalyzes endohydrolysis of 1,4-beta-D-glucosidic linkages in xyloglucan with retention of the beta-configuration of the glycosyl residues. Specific for xyloglucan and does not hydrolyze other cell wall components. The chain is Probable xyloglucan-specific endo-beta-1,4-glucanase A (xgeA) from Neosartorya fischeri (strain ATCC 1020 / DSM 3700 / CBS 544.65 / FGSC A1164 / JCM 1740 / NRRL 181 / WB 181) (Aspergillus fischerianus).